The sequence spans 294 residues: UDP-N-acetylenolpyruvoylglucosamine reductase (294 aa).

Positions 26–189 (VGGQADVLFK…IEAEFKGVSS (164 aa)) constitute an FAD-binding PCMH-type domain. Arginine 169 is an active-site residue. The Proton donor role is filled by cysteine 218. The active site involves glutamate 288.

Belongs to the MurB family. Requires FAD as cofactor.

It is found in the cytoplasm. It carries out the reaction UDP-N-acetyl-alpha-D-muramate + NADP(+) = UDP-N-acetyl-3-O-(1-carboxyvinyl)-alpha-D-glucosamine + NADPH + H(+). It participates in cell wall biogenesis; peptidoglycan biosynthesis. Its function is as follows. Cell wall formation. The chain is UDP-N-acetylenolpyruvoylglucosamine reductase from Wolbachia pipientis subsp. Culex pipiens (strain wPip).